A 229-amino-acid polypeptide reads, in one-letter code: GTP cyclohydrolase 1 (229 aa).

Positions 1-31 (MFRESDNTIAPSNQDLNKPVVDKEQPAERTP) are disordered. Residues 7 to 16 (NTIAPSNQDL) are compositionally biased toward polar residues. The Zn(2+) site is built by Cys117, His120, and Cys188.

Belongs to the GTP cyclohydrolase I family. Toroid-shaped homodecamer, composed of two pentamers of five dimers.

It catalyses the reaction GTP + H2O = 7,8-dihydroneopterin 3'-triphosphate + formate + H(+). The protein operates within cofactor biosynthesis; 7,8-dihydroneopterin triphosphate biosynthesis; 7,8-dihydroneopterin triphosphate from GTP: step 1/1. The chain is GTP cyclohydrolase 1 from Rhodopirellula baltica (strain DSM 10527 / NCIMB 13988 / SH1).